The following is a 386-amino-acid chain: MNIHEYQGKAILRSYGVSVPNGKVAFTVEEAVEAAKELGTDVCVVKAQIHAGGRGKAGGVKVAKNLEEVRTYAENILGSTLVTHQTGPEGKEVKRLLIEEGCDIKKEYYVGLVLDRATSQVVLMASEEGGTEIEEVAEKTPEKIFKEYIDPAVGLQGFQARRIAFHINIPKELVGQAVKFMMGLYRVFIEKDCSIAEINPLVTTGDGKVMALDAKLNFDSNALYRHKDILELRDLDEEDPKEIEASKYDLNYIPLDGNIGCMVNGAGLAMATMDIIKHYHGDPANFLDVGGGATAEKVTEAFKIILSDKNVKGIFVNIFGGIMKCDVIAEGVVEATKQVGLELPLVVRLEGTNVELGKKILNESGLNIVAAESMADGAQKIVSLVG.

One can recognise an ATP-grasp domain in the interval Lys-9 to Glu-244. ATP contacts are provided by residues Lys-46, Gly-53–Gly-55, Glu-99, Cys-102, and Glu-107. Mg(2+)-binding residues include Asn-199 and Asp-213. Residues Asn-264 and Gly-321–Met-323 contribute to the substrate site.

Belongs to the succinate/malate CoA ligase beta subunit family. As to quaternary structure, heterotetramer of two alpha and two beta subunits. The cofactor is Mg(2+).

It catalyses the reaction succinate + ATP + CoA = succinyl-CoA + ADP + phosphate. The catalysed reaction is GTP + succinate + CoA = succinyl-CoA + GDP + phosphate. It functions in the pathway carbohydrate metabolism; tricarboxylic acid cycle; succinate from succinyl-CoA (ligase route): step 1/1. Functionally, succinyl-CoA synthetase functions in the citric acid cycle (TCA), coupling the hydrolysis of succinyl-CoA to the synthesis of either ATP or GTP and thus represents the only step of substrate-level phosphorylation in the TCA. The beta subunit provides nucleotide specificity of the enzyme and binds the substrate succinate, while the binding sites for coenzyme A and phosphate are found in the alpha subunit. In Bacillus cytotoxicus (strain DSM 22905 / CIP 110041 / 391-98 / NVH 391-98), this protein is Succinate--CoA ligase [ADP-forming] subunit beta.